The chain runs to 608 residues: Glutamyl-tRNA(Gln) amidotransferase subunit E (608 aa).

The tract at residues 401–428 (PEETRAANPDGTTRFLRPRPGAARMYPE) is disordered.

The protein belongs to the GatB/GatE family. GatE subfamily. Heterodimer of GatD and GatE.

The catalysed reaction is L-glutamyl-tRNA(Gln) + L-glutamine + ATP + H2O = L-glutaminyl-tRNA(Gln) + L-glutamate + ADP + phosphate + H(+). Allows the formation of correctly charged Gln-tRNA(Gln) through the transamidation of misacylated Glu-tRNA(Gln) in organisms which lack glutaminyl-tRNA synthetase. The reaction takes place in the presence of glutamine and ATP through an activated gamma-phospho-Glu-tRNA(Gln). The GatDE system is specific for glutamate and does not act on aspartate. The chain is Glutamyl-tRNA(Gln) amidotransferase subunit E from Pyrobaculum arsenaticum (strain DSM 13514 / JCM 11321 / PZ6).